Consider the following 160-residue polypeptide: Major pollen allergen Bet v 1-F/I (160 aa).

Brassinolide-binding residues include Lys-55, Tyr-82, Tyr-84, and Asn-101.

This sequence belongs to the BetVI family.

It localises to the cytoplasm. Functionally, may be a general steroid carrier protein. This chain is Major pollen allergen Bet v 1-F/I (BETV1F), found in Betula pendula (European white birch).